Reading from the N-terminus, the 161-residue chain is Large ribosomal subunit protein uL15 (161 aa).

Residues Met-1–Gly-43 are disordered. Residues Arg-21–Gly-37 are compositionally biased toward gly residues.

This sequence belongs to the universal ribosomal protein uL15 family. In terms of assembly, part of the 50S ribosomal subunit.

Binds to the 23S rRNA. The sequence is that of Large ribosomal subunit protein uL15 from Rhodopseudomonas palustris (strain BisB5).